A 117-amino-acid polypeptide reads, in one-letter code: Acrylate reductase cytochrome subunit (117 aa).

A signal peptide spans 1 to 22 (MKMYKLMLGLVLAGLVSLSAQA). Positions 29, 37, 40, 41, 54, 57, 58, 79, 83, 90, 93, 94, 97, 104, 107, and 108 each coordinate heme c.

The ArdAB flavocytochrome c is composed of a FAD-containing subunit (ArdA) and a heme c-containing subunit (ArdB). The cofactor is heme c.

It is found in the periplasm. Methacrylate acts as a competitive inhibitor of the acrylate reductase activity and suppresses the reductase activity in dose-dependent manner. Functionally, heme c-containing subunit of the ArdAB flavocytochrome c, which catalyzes the reduction of acrylate to propanoate and supports dimethylsulfoniopropionate-dependent anaerobic respiration. In vitro, can use the artificial electron donor methyl viologen. The natural electron donor is probably a low-potential cytochrome c. Also shows weak activity toward methacrylate in vitro (at a 22-fold lower rate) but cannot use other tested 2-enoates, including crotonic, fumaric, sorbic, urocanic, cinnamic, p-coumaric, caffeic or ferulic acids. The protein catalyzes a unidirectional reaction and cannot oxidize propanoate with phenazine metasulfate and dichlorophenolindophenol as electron acceptors. The protein is Acrylate reductase cytochrome subunit of Shewanella woodyi (strain ATCC 51908 / MS32).